The primary structure comprises 200 residues: Glutathione peroxidase 1 (200 aa).

Ser31 is modified (phosphoserine). Sec46 is a catalytic residue. Position 46 (Sec46) is a non-standard amino acid, selenocysteine. An N6-acetyllysine; alternate mark is found at Lys85 and Lys111. N6-succinyllysine; alternate occurs at positions 85 and 111. An N6-acetyllysine modification is found at Lys118. Lys145 carries the post-translational modification N6-acetyllysine; alternate. An N6-succinyllysine; alternate modification is found at Lys145. Ser194 bears the Phosphoserine mark.

Belongs to the glutathione peroxidase family. As to quaternary structure, homotetramer. Interacts with MIEN1. In terms of processing, during periods of oxidative stress, Sec-46 may react with a superoxide radical, irreversibly lose hydroselenide and be converted to dehydroalanine.

It localises to the cytoplasm. The protein resides in the mitochondrion. It carries out the reaction 2 glutathione + H2O2 = glutathione disulfide + 2 H2O. The catalysed reaction is a hydroperoxy polyunsaturated fatty acid + 2 glutathione = a hydroxy polyunsaturated fatty acid + glutathione disulfide + H2O. The enzyme catalyses tert-butyl hydroperoxide + 2 glutathione = tert-butanol + glutathione disulfide + H2O. It catalyses the reaction cumene hydroperoxide + 2 glutathione = 2-phenylpropan-2-ol + glutathione disulfide + H2O. It carries out the reaction (13S)-hydroperoxy-(9Z,11E)-octadecadienoate + 2 glutathione = (13S)-hydroxy-(9Z,11E)-octadecadienoate + glutathione disulfide + H2O. The catalysed reaction is (9S)-hydroperoxy-(10E,12Z)-octadecadienoate + 2 glutathione = (9S)-hydroxy-(10E,12Z)-octadecadienoate + glutathione disulfide + H2O. The enzyme catalyses (5S)-hydroperoxy-(6E,8Z,11Z,14Z)-eicosatetraenoate + 2 glutathione = (5S)-hydroxy-(6E,8Z,11Z,14Z)-eicosatetraenoate + glutathione disulfide + H2O. It catalyses the reaction (12S)-hydroperoxy-(5Z,8Z,10E,14Z)-eicosatetraenoate + 2 glutathione = (12S)-hydroxy-(5Z,8Z,10E,14Z)-eicosatetraenoate + glutathione disulfide + H2O. It carries out the reaction (12R)-hydroperoxy-(5Z,8Z,10E,14Z)-eicosatetraenoate + 2 glutathione = (12R)-hydroxy-(5Z,8Z,10E,14Z)-eicosatetraenoate + glutathione disulfide + H2O. The catalysed reaction is (15S)-hydroperoxy-(5Z,8Z,11Z,13E)-eicosatetraenoate + 2 glutathione = (15S)-hydroxy-(5Z,8Z,11Z,13E)-eicosatetraenoate + glutathione disulfide + H2O. The enzyme catalyses (5S)-hydroperoxy-(6E,8Z,11Z,14Z,17Z)-eicosapentaenoate + 2 glutathione = (5S)-hydroxy-(6E,8Z,11Z,14Z,17Z)-eicosapentaenoate + glutathione disulfide + H2O. It catalyses the reaction (12S)-hydroperoxy-(5Z,8Z,10E,14Z,17Z)-eicosapentaenoate + 2 glutathione = (12S)-hydroxy-(5Z,8Z,10E,14Z,17Z)-eicosapentaenoate + glutathione disulfide + H2O. It carries out the reaction (15S)-hydroperoxy-(5Z,8Z,11Z,13E,17Z)-eicosapentaenoate + 2 glutathione = (15S)-hydroxy-(5Z,8Z,11Z,13E,17Z)-eicosapentaenoate + glutathione disulfide + H2O. The catalysed reaction is (15S)-hydroperoxy-(11Z,13E)-eicosadienoate + 2 glutathione = (15S)-hydroxy-(11Z,13E)-eicosadienoate + glutathione disulfide + H2O. The enzyme catalyses (17S)-hydroperoxy-(4Z,7Z,10Z,13Z,15E,19Z)-docosahexaenoate + 2 glutathione = (17S)-hydroxy-(4Z,7Z,10Z,13Z,15E,19Z)-docosahexaenoate + glutathione disulfide + H2O. Functionally, catalyzes the reduction of hydroperoxides in a glutathione-dependent manner thus regulating cellular redox homeostasis. Can reduce small soluble hydroperoxides such as H2O2, cumene hydroperoxide and tert-butyl hydroperoxide, as well as several fatty acid-derived hydroperoxides. In platelets catalyzes the reduction of 12-hydroperoxyeicosatetraenoic acid, the primary product of the arachidonate 12-lipoxygenase pathway. The sequence is that of Glutathione peroxidase 1 (GPX1) from Oryctolagus cuniculus (Rabbit).